The sequence spans 100 residues: MFAVIETGGKQYLVKKGSIIKVERLQAEEKEEVEINKVICVSNNGLSCSSNAVVKAEVLEQCRDKKIIIFKKKRRKNYRRKNGHRQYITVLRINEISLQK.

This sequence belongs to the bacterial ribosomal protein bL21 family. Part of the 50S ribosomal subunit. Contacts protein L20.

Its function is as follows. This protein binds to 23S rRNA in the presence of protein L20. The sequence is that of Large ribosomal subunit protein bL21 from Wolbachia pipientis subsp. Culex pipiens (strain wPip).